Here is a 345-residue protein sequence, read N- to C-terminus: DNA-directed RNA polymerases I and III subunit rpac1 (345 aa).

Residues 1–11 (MVNKSTTNGVS) are compositionally biased toward polar residues. A disordered region spans residues 1-20 (MVNKSTTNGVSDPNLENKRT).

It belongs to the archaeal Rpo3/eukaryotic RPB3 RNA polymerase subunit family. In terms of assembly, component of the RNA polymerase I (Pol I) and RNA polymerase III (Pol III) complexes consisting of at least 13 and 17 subunits, respectively. Interacts with RPAC19/RPAC2.

The protein localises to the nucleus. In terms of biological role, DNA-dependent RNA polymerase catalyzes the transcription of DNA into RNA using the four ribonucleoside triphosphates as substrates. Common component of RNA polymerases I and III which synthesize ribosomal RNA precursors and small RNAs, such as 5S rRNA and tRNAs, respectively. RPAC1 is part of the Pol core element with the central large cleft and probably a clamp element that moves to open and close the cleft. The polypeptide is DNA-directed RNA polymerases I and III subunit rpac1 (polr1c) (Dictyostelium discoideum (Social amoeba)).